The following is a 477-amino-acid chain: Aspartyl/glutamyl-tRNA(Asn/Gln) amidotransferase subunit B (477 aa).

The protein belongs to the GatB/GatE family. GatB subfamily. Heterotrimer of A, B and C subunits.

It catalyses the reaction L-glutamyl-tRNA(Gln) + L-glutamine + ATP + H2O = L-glutaminyl-tRNA(Gln) + L-glutamate + ADP + phosphate + H(+). It carries out the reaction L-aspartyl-tRNA(Asn) + L-glutamine + ATP + H2O = L-asparaginyl-tRNA(Asn) + L-glutamate + ADP + phosphate + 2 H(+). Allows the formation of correctly charged Asn-tRNA(Asn) or Gln-tRNA(Gln) through the transamidation of misacylated Asp-tRNA(Asn) or Glu-tRNA(Gln) in organisms which lack either or both of asparaginyl-tRNA or glutaminyl-tRNA synthetases. The reaction takes place in the presence of glutamine and ATP through an activated phospho-Asp-tRNA(Asn) or phospho-Glu-tRNA(Gln). This is Aspartyl/glutamyl-tRNA(Asn/Gln) amidotransferase subunit B from Oenococcus oeni (strain ATCC BAA-331 / PSU-1).